Here is a 266-residue protein sequence, read N- to C-terminus: Arcelin-4 (266 aa).

A signal peptide spans 1–21 (MGSSKLLSLALLLVLLTHANS). 2 N-linked (GlcNAc...) asparagine glycosylation sites follow: N28 and N92.

It belongs to the leguminous lectin family.

Seed storage. This carbohydrate-binding lectin has toxic effects on the important bean bruchid pests, Z.subfasciatus and A.obtectus. The sequence is that of Arcelin-4 (ARC4) from Phaseolus vulgaris (Kidney bean).